Here is a 352-residue protein sequence, read N- to C-terminus: UDP-N-acetylglucosamine--N-acetylmuramyl-(pentapeptide) pyrophosphoryl-undecaprenol N-acetylglucosamine transferase (352 aa).

2 residues coordinate UDP-N-acetyl-alpha-D-glucosamine: Ser195 and Gln287.

This sequence belongs to the glycosyltransferase 28 family. MurG subfamily.

Its subcellular location is the cell membrane. The enzyme catalyses Mur2Ac(oyl-L-Ala-gamma-D-Glu-L-Lys-D-Ala-D-Ala)-di-trans,octa-cis-undecaprenyl diphosphate + UDP-N-acetyl-alpha-D-glucosamine = beta-D-GlcNAc-(1-&gt;4)-Mur2Ac(oyl-L-Ala-gamma-D-Glu-L-Lys-D-Ala-D-Ala)-di-trans,octa-cis-undecaprenyl diphosphate + UDP + H(+). It participates in cell wall biogenesis; peptidoglycan biosynthesis. Cell wall formation. Catalyzes the transfer of a GlcNAc subunit on undecaprenyl-pyrophosphoryl-MurNAc-pentapeptide (lipid intermediate I) to form undecaprenyl-pyrophosphoryl-MurNAc-(pentapeptide)GlcNAc (lipid intermediate II). The sequence is that of UDP-N-acetylglucosamine--N-acetylmuramyl-(pentapeptide) pyrophosphoryl-undecaprenol N-acetylglucosamine transferase from Streptococcus pneumoniae (strain JJA).